A 782-amino-acid polypeptide reads, in one-letter code: Endonuclease MutS2 (782 aa).

Position 336–343 (336–343 (GPNTGGKT)) interacts with ATP. Positions 707–782 (LDLRGYRYED…GFGVTVATLK (76 aa)) constitute a Smr domain.

It belongs to the DNA mismatch repair MutS family. MutS2 subfamily. Homodimer. Binds to stalled ribosomes, contacting rRNA.

Endonuclease that is involved in the suppression of homologous recombination and thus may have a key role in the control of bacterial genetic diversity. Functionally, acts as a ribosome collision sensor, splitting the ribosome into its 2 subunits. Detects stalled/collided 70S ribosomes which it binds and splits by an ATP-hydrolysis driven conformational change. Acts upstream of the ribosome quality control system (RQC), a ribosome-associated complex that mediates the extraction of incompletely synthesized nascent chains from stalled ribosomes and their subsequent degradation. Probably generates substrates for RQC. The protein is Endonuclease MutS2 of Staphylococcus aureus (strain Mu50 / ATCC 700699).